A 940-amino-acid polypeptide reads, in one-letter code: Phosphoenolpyruvate carboxylase (940 aa).

Catalysis depends on residues His-138 and Lys-603.

Belongs to the PEPCase type 1 family. Mg(2+) is required as a cofactor.

It carries out the reaction oxaloacetate + phosphate = phosphoenolpyruvate + hydrogencarbonate. Forms oxaloacetate, a four-carbon dicarboxylic acid source for the tricarboxylic acid cycle. In Streptococcus thermophilus (strain CNRZ 1066), this protein is Phosphoenolpyruvate carboxylase.